The following is a 140-amino-acid chain: Large ribosomal subunit protein bL17 (140 aa).

It belongs to the bacterial ribosomal protein bL17 family. Part of the 50S ribosomal subunit. Contacts protein L32.

This is Large ribosomal subunit protein bL17 from Paramagnetospirillum magneticum (strain ATCC 700264 / AMB-1) (Magnetospirillum magneticum).